The following is a 477-amino-acid chain: Cytochrome c-552 (477 aa).

The signal sequence occupies residues 1–26; it reads MVRISTSISYLWGMVASLFLMMPAYS. His-94 is a binding site for heme c. Heme contacts are provided by Cys-122, Cys-125, and Lys-126. Positions 160, 163, 164, 209, 212, and 213 each coordinate heme c. Residues Glu-215, Tyr-216, Lys-261, and Gln-263 each coordinate Ca(2+). Position 216 (Tyr-216) interacts with substrate. Residue His-264 participates in substrate binding. His-275, Cys-282, Cys-285, His-286, His-301, Cys-314, Cys-317, His-318, and His-393 together coordinate heme c.

This sequence belongs to the cytochrome c-552 family. Ca(2+) serves as cofactor. It depends on heme c as a cofactor.

It localises to the periplasm. The catalysed reaction is 6 Fe(III)-[cytochrome c] + NH4(+) + 2 H2O = 6 Fe(II)-[cytochrome c] + nitrite + 8 H(+). The protein operates within nitrogen metabolism; nitrate reduction (assimilation). Its function is as follows. Catalyzes the reduction of nitrite to ammonia, consuming six electrons in the process. This chain is Cytochrome c-552, found in Pectobacterium carotovorum subsp. carotovorum (strain PC1).